A 597-amino-acid polypeptide reads, in one-letter code: Peptidyl-prolyl cis-trans isomerase-like 2 (597 aa).

Positions 41–114 (KKLPFNFCAA…TTDSDENKGD (74 aa)) constitute a U-box domain. The 156-residue stretch at 328–483 (NKGYVRMETN…NKIVIKDMII (156 aa)) folds into the PPIase cyclophilin-type domain. Over residues 495–519 (KKQKEGEEERKREVARQGGTEDDRT) the composition is skewed to basic and acidic residues. Disordered stretches follow at residues 495-521 (KKQKEGEEERKREVARQGGTEDDRTTW) and 560-597 (ATTTTTTTRKAEEEEVDTWEEPVRKKAKMGGFGNFDGW).

This sequence belongs to the cyclophilin-type PPIase family. PPIL2 subfamily.

Its subcellular location is the nucleus. It catalyses the reaction [protein]-peptidylproline (omega=180) = [protein]-peptidylproline (omega=0). It carries out the reaction S-ubiquitinyl-[E2 ubiquitin-conjugating enzyme]-L-cysteine + [acceptor protein]-L-lysine = [E2 ubiquitin-conjugating enzyme]-L-cysteine + N(6)-ubiquitinyl-[acceptor protein]-L-lysine.. It functions in the pathway protein modification; protein ubiquitination. In terms of biological role, may catalyze the cis-trans isomerization of proline imidic peptide bonds in oligopeptides thereby assisting the folding of proteins. May also function as a chaperone, playing a role in intracellular transport of proteins. May also have a protein ubiquitin ligase activity acting as an E3 ubiquitin protein ligase or as a ubiquitin-ubiquitin ligase promoting elongation of ubiquitin chains on proteins. In Neurospora crassa (strain ATCC 24698 / 74-OR23-1A / CBS 708.71 / DSM 1257 / FGSC 987), this protein is Peptidyl-prolyl cis-trans isomerase-like 2 (ppi-2).